The sequence spans 443 residues: Cyclic AMP receptor 4 (443 aa).

At 1–11 (MKVLQEINLTY) the chain is on the extracellular side. The N-linked (GlcNAc...) asparagine glycan is linked to Asn8. Residues 12–32 (SILVIADFSSIFGCLLVLIAF) form a helical membrane-spanning segment. The Cytoplasmic segment spans residues 33–44 (KKLKLLRNHITR). A helical transmembrane segment spans residues 45-65 (VIACFCVSSLLKDIISTGLTL). At 66–89 (SLGPQNEAGSTSFQCYLYAITITY) the chain is on the extracellular side. The chain crosses the membrane as a helical span at residues 90 to 110 (GSLACWLWTLCLAFSIYNLIV). The Cytoplasmic segment spans residues 111–119 (KREPEPEKY). A helical membrane pass occupies residues 120-140 (EKFYHGVCWTIPLICVIVMLA). Residues 141-161 (KKTIEPVGNWCWISEKYVGYR) lie on the Extracellular side of the membrane. A helical membrane pass occupies residues 162 to 182 (FGLFYGPFFAIWIISAVLVGL). The Cytoplasmic segment spans residues 183–208 (TSRYTYSVIRNSVSDNKDKHMTYQFK). Residues 209 to 229 (LINYIIVFLLCWVFAIVNRIL) traverse the membrane as a helical segment. Topologically, residues 230 to 263 (NGLGYYPTLPNILHTYFSVSHGFFASVTFIYNNP) are extracellular. A helical transmembrane segment spans residues 264 to 284 (LMWRYWGSKIFLIFAKFGYFV). At 285-443 (ELQRRLDRNK…DEREKKDNKF (159 aa)) the chain is on the cytoplasmic side. Disordered stretches follow at residues 325–354 (NDISNDNQQQQQQQQTPQQPQQQFQQQQSP) and 396–443 (SFEI…DNKF). The span at 332 to 352 (QQQQQQQQTPQQPQQQFQQQQ) shows a compositional bias: low complexity. The segment covering 396–410 (SFEITQPSNDLNTIE) has biased composition (polar residues). Over residues 411–425 (NNNNYNNNNNNNNNN) the composition is skewed to low complexity. Positions 429–443 (IEKEKDEREKKDNKF) are enriched in basic and acidic residues.

It belongs to the G-protein coupled receptor 5 family. C-terminal Ser or Thr residues may be phosphorylated.

The protein resides in the membrane. Functionally, receptor for cAMP. Regulates axial patterning and cellular differentiation during late development. The activity of this receptor is mediated by G proteins. This is Cyclic AMP receptor 4 (carD) from Dictyostelium discoideum (Social amoeba).